The primary structure comprises 2167 residues: SH3 and multiple ankyrin repeat domains protein 1 (2167 aa).

A disordered region spans residues 1–63 (MTHSPATSED…TRGLQGRSMS (63 aa)). A compositionally biased stretch (low complexity) spans 17 to 32 (SECPEGGSESDSSPDG). Positions 33 to 47 (PGRGPQGTRGRGSGA) are enriched in gly residues. Position 43 is an omega-N-methylarginine (arginine 43). The residue at position 186 (tyrosine 186) is a Phosphotyrosine. ANK repeat units follow at residues 212–242 (SGET…HIDF), 246–275 (DGMT…SPNY), 279–309 (RGLT…QLGI), 313–342 (NGWQ…EPGA), 346–375 (SGNT…NKDV), and 379–407 (NGQT…EQDV). Disordered stretches follow at residues 413–432 (SPKY…TVPP) and 454–546 (PGAS…SRGR). Positions 454–479 (PGASSSGTPGPTSGSQGQSQPSAPST) are enriched in low complexity. Residues 527 to 542 (PAGGTGGSGGPGGSLG) are compositionally biased toward gly residues. Phosphoserine is present on serine 540. Position 544 is an omega-N-methylarginine (arginine 544). In terms of domain architecture, SH3 spans 554 to 613 (VPGRSFMAVKSYQAQGEGEISLSKGEKIKVLSIGEGGFWEGQVKGRVGWFPSDCLEEVAN). The 95-residue stretch at 663–757 (TVLLQKKDSE…TLMVKVVMVT (95 aa)) folds into the PDZ domain. Phosphoserine is present on residues serine 671 and serine 791. The disordered stretch occupies residues 841–894 (ISASESPGPGGLASLGKHRPKGFFATESSFDPHHRSQPSYDRPSFLPPGPGLML). Serine 898 is subject to Phosphoserine. 2 disordered regions span residues 917–1233 (SRSL…LDFT) and 1245–1290 (RREG…RHSK). Residues 928-947 (IPPPPTTSPPEPPYSTPPAP) show a composition bias toward pro residues. Residue arginine 958 is modified to Omega-N-methylarginine. Over residues 969–980 (PLPASSPSSFDG) the composition is skewed to low complexity. A compositionally biased stretch (basic residues) spans 1004-1028 (AHHHPPHHHHHHAPPPQPHHHHAHP). Arginine 1059 is modified (omega-N-methylarginine). Over residues 1064 to 1089 (SPTSGAPSPSHHSSSGGSSGPAQAPA) the composition is skewed to low complexity. Omega-N-methylarginine occurs at positions 1098 and 1109. 2 stretches are compositionally biased toward low complexity: residues 1132-1146 (SLPP…ALPR) and 1171-1184 (STSS…GSST). Residues 1203-1224 (SPAPATSPVPPSPSPVPTPASP) show a composition bias toward pro residues. Residues 1245 to 1256 (RREGGWQNEARR) show a composition bias toward basic and acidic residues. Asymmetric dimethylarginine is present on arginine 1257. Serine 1291 carries the phosphoserine modification. Disordered stretches follow at residues 1308–1331 (GGSS…GSSS), 1361–1417 (LAAR…VLRL), 1429–1458 (RAGL…PPTA), 1500–1725 (FLEN…AGVA), 1740–1790 (GQAF…TPTS), 1828–1866 (VPPV…QPQA), 1898–1988 (PWAR…STRH), and 2002–2029 (RRAP…LPIL). The span at 1363–1372 (ARERALKESS) shows a compositional bias: basic and acidic residues. A compositionally biased stretch (pro residues) spans 1378–1395 (PQPPPRPPSPRYDAPPPT). The span at 1396-1408 (LHHHSPHSPHSPH) shows a compositional bias: basic residues. An Omega-N-methylarginine modification is found at arginine 1429. Serine 1442 bears the Phosphoserine mark. Residues 1530 to 1541 (RRVLPTSPTSPR) show a composition bias toward low complexity. Over residues 1589-1615 (PLTPGPPHPLPDPPSPATPLPAAPPPA) the composition is skewed to pro residues. The span at 1624–1641 (DSTASSLTSYDSEVATLT) shows a compositional bias: polar residues. A compositionally biased stretch (pro residues) spans 1648 to 1676 (PGDPPAPGPPAPAAPAPPAPQPGPDPPPG). Positions 1684-1694 (VDSRSSSDHPL) are enriched in basic and acidic residues. The span at 1695-1708 (ETISSASTLSSLSA) shows a compositional bias: low complexity. Gly residues predominate over residues 1709–1724 (EGGGNTGGVAGGGAGV). A compositionally biased stretch (pro residues) spans 1850 to 1861 (PGPPPPPLPGPL). Residue arginine 1901 is modified to Omega-N-methylarginine. Composition is skewed to low complexity over residues 1934 to 1945 (SQTSLLSKPSSS), 1960 to 1985 (TGSG…ASAS), and 2002 to 2012 (RRAPSPSLLPA). 3 positions are modified to omega-N-methylarginine: arginine 2022, arginine 2042, and arginine 2080. One can recognise an SAM domain in the interval 2104–2167 (WTKFDVADWL…DRALKFFLER (64 aa)).

Belongs to the SHANK family. May homomultimerize via its SAM domain. Interacts with the C-terminus of SSTR2 via the PDZ domain. Interacts with SHARPIN, SPTAN1, HOMER1 and DLGAP1/GKAP. Part of a complex with DLG4/PSD-95 and DLGAP1/GKAP. Interacts with BAIAP2. Interacts with IGSF9. Interacts with HOMER1 and HOMER3. In terms of tissue distribution, in brain, highly expressed in cortex, hippocampus and cerebellum.

It localises to the cytoplasm. The protein localises to the synapse. Its subcellular location is the postsynaptic density. Seems to be an adapter protein in the postsynaptic density (PSD) of excitatory synapses that interconnects receptors of the postsynaptic membrane including NMDA-type and metabotropic glutamate receptors, and the actin-based cytoskeleton. Plays a role in the structural and functional organization of the dendritic spine and synaptic junction. Overexpression promotes maturation of dendritic spines and the enlargement of spine heads via its ability to recruit Homer to postsynaptic sites, and enhances presynaptic function. The protein is SH3 and multiple ankyrin repeat domains protein 1 (Shank1) of Mus musculus (Mouse).